The chain runs to 36 residues: Cytochrome b6-f complex subunit 7 (36 aa).

The chain crosses the membrane as a helical span at residues 5–25 (IFFVAGLVFVLTLVGMAIGFG).

The protein belongs to the PetM family. As to quaternary structure, the 4 large subunits of the cytochrome b6-f complex are cytochrome b6, subunit IV (17 kDa polypeptide, PetD), cytochrome f and the Rieske protein, while the 4 small subunits are PetG, PetL, PetM and PetN. The complex functions as a dimer.

It is found in the cell inner membrane. Functionally, component of the cytochrome b6-f complex, which mediates electron transfer between photosystem II (PSII) and photosystem I (PSI), cyclic electron flow around PSI, and state transitions. The sequence is that of Cytochrome b6-f complex subunit 7 from Gloeobacter violaceus (strain ATCC 29082 / PCC 7421).